The chain runs to 316 residues: ATP synthase gamma chain (316 aa).

Belongs to the ATPase gamma chain family. F-type ATPases have 2 components, CF(1) - the catalytic core - and CF(0) - the membrane proton channel. CF(1) has five subunits: alpha(3), beta(3), gamma(1), delta(1), epsilon(1). CF(0) has three main subunits: a, b and c.

It is found in the cellular thylakoid membrane. Functionally, produces ATP from ADP in the presence of a proton gradient across the membrane. The gamma chain is believed to be important in regulating ATPase activity and the flow of protons through the CF(0) complex. This Synechococcus sp. (strain ATCC 27144 / PCC 6301 / SAUG 1402/1) (Anacystis nidulans) protein is ATP synthase gamma chain.